The following is a 117-amino-acid chain: Large ribosomal subunit protein bL20c (117 aa).

It belongs to the bacterial ribosomal protein bL20 family.

Its subcellular location is the plastid. The protein localises to the chloroplast. Functionally, binds directly to 23S ribosomal RNA and is necessary for the in vitro assembly process of the 50S ribosomal subunit. It is not involved in the protein synthesizing functions of that subunit. This chain is Large ribosomal subunit protein bL20c, found in Acorus gramineus (Dwarf sweet flag).